Here is a 289-residue protein sequence, read N- to C-terminus: Type II methyltransferase M.MjaIII (289 aa).

Residues Trp-9, Lys-13, Asp-63, and Asp-199 each contribute to the S-adenosyl-L-methionine site.

Belongs to the N(4)/N(6)-methyltransferase family.

It catalyses the reaction a 2'-deoxyadenosine in DNA + S-adenosyl-L-methionine = an N(6)-methyl-2'-deoxyadenosine in DNA + S-adenosyl-L-homocysteine + H(+). Functionally, an alpha subtype methylase that recognizes the double-stranded sequence 5'-GATC-3', methylates A-2 on both strands, and protects the DNA from cleavage by the MjaIII endonuclease. The polypeptide is Type II methyltransferase M.MjaIII (mjaIIIM) (Methanocaldococcus jannaschii (strain ATCC 43067 / DSM 2661 / JAL-1 / JCM 10045 / NBRC 100440) (Methanococcus jannaschii)).